Consider the following 143-residue polypeptide: Ribulose bisphosphate carboxylase large chain (143 aa).

A propeptide spanning residues 1-2 is cleaved from the precursor; sequence MS. At Pro3 the chain carries N-acetylproline. At Lys14 the chain carries N6,N6,N6-trimethyllysine. A substrate-binding site is contributed by Xaa123.

The protein belongs to the RuBisCO large chain family. Type I subfamily. In terms of assembly, heterohexadecamer of 8 large chains and 8 small chains.

Its subcellular location is the plastid. The protein resides in the chloroplast. It carries out the reaction 2 (2R)-3-phosphoglycerate + 2 H(+) = D-ribulose 1,5-bisphosphate + CO2 + H2O. The enzyme catalyses D-ribulose 1,5-bisphosphate + O2 = 2-phosphoglycolate + (2R)-3-phosphoglycerate + 2 H(+). RuBisCO catalyzes two reactions: the carboxylation of D-ribulose 1,5-bisphosphate, the primary event in carbon dioxide fixation, as well as the oxidative fragmentation of the pentose substrate in the photorespiration process. Both reactions occur simultaneously and in competition at the same active site. The polypeptide is Ribulose bisphosphate carboxylase large chain (rbcL) (Nemopanthus mucronatus (Catberry)).